We begin with the raw amino-acid sequence, 338 residues long: Ketol-acid reductoisomerase (NADP(+)) (338 aa).

The KARI N-terminal Rossmann domain maps to 3–183 (IELLYDADAD…GGARAGVIPT (181 aa)). Residues 26 to 29 (YGSQ), R49, S52, S54, and 84 to 87 (DTSQ) each bind NADP(+). The active site involves H109. Residue G135 participates in NADP(+) binding. A KARI C-terminal knotted domain is found at 184–329 (TFEAETVTDL…AKLRDLMSWV (146 aa)). Mg(2+) is bound by residues D192, E196, E228, and E232. Position 253 (S253) interacts with substrate.

This sequence belongs to the ketol-acid reductoisomerase family. Mg(2+) serves as cofactor.

The catalysed reaction is (2R)-2,3-dihydroxy-3-methylbutanoate + NADP(+) = (2S)-2-acetolactate + NADPH + H(+). It carries out the reaction (2R,3R)-2,3-dihydroxy-3-methylpentanoate + NADP(+) = (S)-2-ethyl-2-hydroxy-3-oxobutanoate + NADPH + H(+). The protein operates within amino-acid biosynthesis; L-isoleucine biosynthesis; L-isoleucine from 2-oxobutanoate: step 2/4. Its pathway is amino-acid biosynthesis; L-valine biosynthesis; L-valine from pyruvate: step 2/4. Involved in the biosynthesis of branched-chain amino acids (BCAA). Catalyzes an alkyl-migration followed by a ketol-acid reduction of (S)-2-acetolactate (S2AL) to yield (R)-2,3-dihydroxy-isovalerate. In the isomerase reaction, S2AL is rearranged via a Mg-dependent methyl migration to produce 3-hydroxy-3-methyl-2-ketobutyrate (HMKB). In the reductase reaction, this 2-ketoacid undergoes a metal-dependent reduction by NADPH to yield (R)-2,3-dihydroxy-isovalerate. The chain is Ketol-acid reductoisomerase (NADP(+)) from Corynebacterium glutamicum (strain ATCC 13032 / DSM 20300 / JCM 1318 / BCRC 11384 / CCUG 27702 / LMG 3730 / NBRC 12168 / NCIMB 10025 / NRRL B-2784 / 534).